The primary structure comprises 1094 residues: MGCAYSKTCIGQICATKENSIRQTHQQAPSRGGTRATAAAAAVEEDNPVFNFSSDAVDDVDNDEIHQLGLSRDQEWGITRLSRVSSQFLPPDGSRVVKVPSCNYELRCSFLSQRGYYPDALDKANQDSFAIHTPFGSNSDDHFFGVFDGHGEFGAQCSQFVKRRLCENLLRHGRFRVDPAEACNSAFLTTNSQLHADLVDDSMSGTTAITVMVRGRTIYVANAGDSRAVLAEKRDGDLVAVDLSIDQTPFRPDELERVKLCGARVLTLDQIEGLKNPDVQCWGTEEDDDGDPPRLWVPNGMYPGTAFTRSIGDSIAETIGVVANPEIAVVELTPDNPFFVVASDGVFEFISSQTVVDMVAKHKDPRDACAAIVAESYRLWLQYETRTDDITIIVVHIDGLKDDAPRQLSSTGTQLQPPIPQVVELTGSESPSTFGWNSKNQRVRHDLSRARIRAIENSLENGHAWVPPSPAHRKTWEEEAHIERVLRDHFLFRKLTDSQCQVLLDCMQRLEANPGDIVVKQGGEGDCFYVVGSGEFEVLATQDGKNGEVPRILQRYTAEKQSSFGELALMHNKPLQASVRAVDHGTLWALKREDFRGILMSEFSNLASLKLLRSVDLLSRLTILQLSHVAESLSEACFSDGQTIVTKDQKLQGLYVIQKGRVKISFCTEVLESQNVSSLTTGITNEYDNLEIGTEVSIEKHEGSYFGEWALLGELKDSLSVVAVGEVVCVVLTKENFESAVGPLTNISDDGPKTRHSSFELSKESAKVTDTTALAKATLADLEWTTCLSTTDCSEIGLVHLKDKENLLSLKRFSKQKVKKLGKEAQVLKERNLMKNVIKPSAIVPEILCTCVDQTFAAILLNTTLACPISSLLHSPLDESSVRFITGSLVSAIEDIHKNEILFRGSSPELLMLDQSGYLQIVDFRFAKKLSGERTFTICGNADYLAPEIVQGKGHGYAADWWALGVLIYYMLEGEMPFGSWRESELDTFQKIAKGQLTFPRVLSSEAEDLITKLLEVDENLRFGSQGGPESIKKHPWFNGLKWEAISNREFQVPQEIISRIHHHLENDNVLPLETSKSLDTTEDQDAQNWLEEW.

The PPM-type phosphatase domain occupies 107–397; that stretch reads RCSFLSQRGY…DDITIIVVHI (291 aa). Mn(2+)-binding residues include aspartate 148, glycine 149, aspartate 344, and aspartate 388. A nucleoside 3',5'-cyclic phosphate contacts are provided by residues 491 to 616 and 617 to 758; these read LFRK…RSVD and LLSR…RHSS. In terms of domain architecture, Protein kinase spans 785-1038; the sequence is TTCLSTTDCS…PESIKKHPWF (254 aa). ATP contacts are provided by residues 791–799 and lysine 811; that span reads TDCSEIGLV.

This sequence in the N-terminal section; belongs to the PP2C family. In the C-terminal section; belongs to the protein kinase superfamily. AGC Ser/Thr protein kinase family. Mg(2+) is required as a cofactor. It depends on Mn(2+) as a cofactor.

It catalyses the reaction O-phospho-L-seryl-[protein] + H2O = L-seryl-[protein] + phosphate. The enzyme catalyses O-phospho-L-threonyl-[protein] + H2O = L-threonyl-[protein] + phosphate. This chain is Protein phosphatase 2C and cyclic nucleotide-binding/kinase domain-containing protein, found in Arabidopsis thaliana (Mouse-ear cress).